We begin with the raw amino-acid sequence, 655 residues long: Putative sensor protein Sfri_3689 (655 aa).

The first 17 residues, 1 to 17 (MKTLLLLLIIITMPVLA), serve as a signal peptide directing secretion. Residues 252–272 (FALAILVAIMSAIGMIFTGFI) traverse the membrane as a helical segment. Residues 419–653 (GIAHEINNPT…QIRLIFALAQ (235 aa)) form the Histidine kinase domain. His-422 is subject to Phosphohistidine; by autocatalysis.

It localises to the cell membrane. The catalysed reaction is ATP + protein L-histidine = ADP + protein N-phospho-L-histidine.. In Shewanella frigidimarina (strain NCIMB 400), this protein is Putative sensor protein Sfri_3689.